A 201-amino-acid polypeptide reads, in one-letter code: MAGKSSLFKVILLGDGGVGKSSLMNRYVTNKFDTQLFHTIGVEFLNKDLEVDGHFVTMQIWDTAGQERFRSLRTPFYRGSDCCLLTFSVDDSQSFQNLSNWKKEFIYYADVKEPESFPFVILGNKIDISERQVSTEEAQAWCRDNGDYPYFETSAKDATNVAAAFEEAVRRVLATEDRSDHLIQTDTVSLHRKPKPSSSCC.

N-acetylalanine is present on alanine 2. Glycine 17 serves as a coordination point for GDP. GTP contacts are provided by glycine 17, valine 18, glycine 19, lysine 20, serine 21, serine 22, threonine 34, histidine 38, and threonine 39. Residues glycine 19, lysine 20, serine 21, and serine 22 each contribute to the GDP site. Serine 21 lines the Mg(2+) pocket. The short motif at 31-42 is the Switch 1 element; the sequence is KFDTQLFHTIGV. Residues threonine 39 and aspartate 62 each contribute to the Mg(2+) site. The Switch 2 motif lies at 64–78; it reads AGQERFRSLRTPFYR. Residues glycine 65, asparagine 124, lysine 125, and aspartate 127 each coordinate GTP. Residues asparagine 124, lysine 125, aspartate 127, alanine 155, and lysine 156 each coordinate GDP. Lysine 156 serves as a coordination point for GTP. Serine 179 carries the phosphoserine modification. Threonine 187 bears the Phosphothreonine mark. S-geranylgeranyl cysteine attachment occurs at residues cysteine 200 and cysteine 201.

This sequence belongs to the small GTPase superfamily. Rab family. As to quaternary structure, interacts (preferentially in its GTP-bound form) with GCC2 (via its GRIP domain). Interacts (GTP-bound form) with SGSM1; the GDP-bound form has much lower affinity for SGSM1. Interacts with SGSM2. The GTP-bound form but not the GDP-bound form interacts with HPS4 and the BLOC-3 complex (heterodimer of HPS1 and HPS4) but does not interact with HPS1 alone. Interacts (GTP-bound form) with NDE1; two RAB9A-GTP molecules lie on the opposite sides of the NDE1 homodimer; the interaction leads to RAB9A-dynein motor tethering. Interacts (GTP-bound form) with NDEL1. Mg(2+) is required as a cofactor.

The protein localises to the cell membrane. Its subcellular location is the endoplasmic reticulum membrane. It is found in the golgi apparatus membrane. It localises to the late endosome. The protein resides in the cytoplasmic vesicle. The protein localises to the phagosome membrane. Its subcellular location is the phagosome. It is found in the cytoplasmic vesicle membrane. It localises to the melanosome. It carries out the reaction GTP + H2O = GDP + phosphate + H(+). Its activity is regulated as follows. Regulated by guanine nucleotide exchange factors (GEFs) which promote the exchange of bound GDP for free GTP. Regulated by GTPase activating proteins (GAPs) which increase the GTP hydrolysis activity. Inhibited by GDP dissociation inhibitors (GDIs). Functionally, the small GTPases Rab are key regulators of intracellular membrane trafficking, from the formation of transport vesicles to their fusion with membranes. Rabs cycle between an inactive GDP-bound form and an active GTP-bound form that is able to recruit to membranes different sets of downstream effectors directly responsible for vesicle formation, movement, tethering and fusion. RAB9A is involved in the transport of proteins between the endosomes and the trans-Golgi network (TGN). Specifically uses NDE1/NDEL1 as an effector to interact with the dynein motor complex in order to control retrograde trafficking of RAB9-associated late endosomes to the TGN. Involved in the recruitment of SGSM2 to melanosomes and is required for the proper trafficking of melanogenic enzymes TYR, TYRP1 and DCT/TYRP2 to melanosomes in melanocytes. This is Ras-related protein Rab-9A (RAB9A) from Canis lupus familiaris (Dog).